The primary structure comprises 223 residues: ATP phosphoribosyltransferase (223 aa).

Belongs to the ATP phosphoribosyltransferase family. Short subfamily. Heteromultimer composed of HisG and HisZ subunits.

It is found in the cytoplasm. It catalyses the reaction 1-(5-phospho-beta-D-ribosyl)-ATP + diphosphate = 5-phospho-alpha-D-ribose 1-diphosphate + ATP. It participates in amino-acid biosynthesis; L-histidine biosynthesis; L-histidine from 5-phospho-alpha-D-ribose 1-diphosphate: step 1/9. Catalyzes the condensation of ATP and 5-phosphoribose 1-diphosphate to form N'-(5'-phosphoribosyl)-ATP (PR-ATP). Has a crucial role in the pathway because the rate of histidine biosynthesis seems to be controlled primarily by regulation of HisG enzymatic activity. The sequence is that of ATP phosphoribosyltransferase from Bordetella bronchiseptica (strain ATCC BAA-588 / NCTC 13252 / RB50) (Alcaligenes bronchisepticus).